The chain runs to 285 residues: Eukaryotic translation initiation factor 3 subunit J (285 aa).

2 disordered regions span residues 1–86 and 232–285; these read MSWD…QLDE and QARL…DDFM. Residues 22–41 show a composition bias toward acidic residues; it reads WEDEEDDGPVLESWDVDPEE. Residues 36 to 81 adopt a coiled-coil conformation; sequence DVDPEEEEKKKKEAKLQEAKRKAELKAKEDAEKAKKDAKRKELEQF. Residues 42–86 show a composition bias toward basic and acidic residues; that stretch reads EEKKKKEAKLQEAKRKAELKAKEDAEKAKKDAKRKELEQFDQLDE. Residues 269-285 are compositionally biased toward acidic residues; that stretch reads DDMDDGQFDDLDDDDFM.

The protein belongs to the eIF-3 subunit J family. As to quaternary structure, component of the eukaryotic translation initiation factor 3 (eIF-3) complex.

The protein localises to the cytoplasm. Its function is as follows. Component of the eukaryotic translation initiation factor 3 (eIF-3) complex, which is involved in protein synthesis of a specialized repertoire of mRNAs and, together with other initiation factors, stimulates binding of mRNA and methionyl-tRNAi to the 40S ribosome. The eIF-3 complex specifically targets and initiates translation of a subset of mRNAs involved in cell proliferation. This chain is Eukaryotic translation initiation factor 3 subunit J, found in Candida albicans (strain SC5314 / ATCC MYA-2876) (Yeast).